A 111-amino-acid chain; its full sequence is Cytochrome c (111 aa).

Alanine 1 is modified (N-acetylalanine). Cysteine 22, cysteine 25, and histidine 26 together coordinate heme c. Residue lysine 80 is modified to N6,N6,N6-trimethyllysine. Position 88 (methionine 88) interacts with heme c. Lysine 94 is subject to N6,N6,N6-trimethyllysine.

It belongs to the cytochrome c family. In terms of processing, binds 1 heme c group covalently per subunit.

It is found in the mitochondrion intermembrane space. Functionally, electron carrier protein. The oxidized form of the cytochrome c heme group can accept an electron from the heme group of the cytochrome c1 subunit of cytochrome reductase. Cytochrome c then transfers this electron to the cytochrome oxidase complex, the final protein carrier in the mitochondrial electron-transport chain. The sequence is that of Cytochrome c from Gossypium barbadense (Sea Island cotton).